The primary structure comprises 208 residues: Protein-L-isoaspartate O-methyltransferase (208 aa).

S59 is a catalytic residue.

This sequence belongs to the methyltransferase superfamily. L-isoaspartyl/D-aspartyl protein methyltransferase family.

It localises to the cytoplasm. The enzyme catalyses [protein]-L-isoaspartate + S-adenosyl-L-methionine = [protein]-L-isoaspartate alpha-methyl ester + S-adenosyl-L-homocysteine. Functionally, catalyzes the methyl esterification of L-isoaspartyl residues in peptides and proteins that result from spontaneous decomposition of normal L-aspartyl and L-asparaginyl residues. It plays a role in the repair and/or degradation of damaged proteins. The chain is Protein-L-isoaspartate O-methyltransferase from Vibrio atlanticus (strain LGP32) (Vibrio splendidus (strain Mel32)).